The chain runs to 78 residues: D-alanyl carrier protein (78 aa).

The Carrier domain maps to 1–77 (MAVKEEVVEI…KVIAKVESLI (77 aa)). Serine 35 bears the O-(pantetheine 4'-phosphoryl)serine mark.

The protein belongs to the DltC family. 4'-phosphopantetheine is transferred from CoA to a specific serine of apo-DCP.

Its subcellular location is the cytoplasm. The protein operates within cell wall biogenesis; lipoteichoic acid biosynthesis. In terms of biological role, carrier protein involved in the D-alanylation of lipoteichoic acid (LTA). The loading of thioester-linked D-alanine onto DltC is catalyzed by D-alanine--D-alanyl carrier protein ligase DltA. The DltC-carried D-alanyl group is further transferred to cell membrane phosphatidylglycerol (PG) by forming an ester bond, probably catalyzed by DltD. D-alanylation of LTA plays an important role in modulating the properties of the cell wall in Gram-positive bacteria, influencing the net charge of the cell wall. The polypeptide is D-alanyl carrier protein (Leuconostoc citreum (strain KM20)).